A 302-amino-acid polypeptide reads, in one-letter code: Protein FdhE homolog (302 aa).

This sequence belongs to the FdhE family.

It localises to the cytoplasm. Functionally, necessary for formate dehydrogenase activity. The protein is Protein FdhE homolog of Haemophilus influenzae (strain PittEE).